A 278-amino-acid chain; its full sequence is Probable esterase TOX9 (278 aa).

Catalysis depends on charge relay system residues Ser-119, Asp-222, and His-250.

The protein belongs to the LovG family.

The protein operates within mycotoxin biosynthesis. In terms of biological role, probable esterase; part of the Tox1A locus, one of the 2 loci that mediate the biosynthesis of T-toxin, a family of linear polyketides 37 to 45 carbons in length, of which the major component is 41 carbons, and which leads to high virulence to maize. One of the PKSs (PKS1 or PKS2) could synthesize a precursor, used subsequently by the other PKS as starter unit, to add additional carbons. Variability in the length of the final carbon backbone C35-47 could be achieved by varying the number of condensation cycles, or use of different starter or extender units or might be due to decarboxylation of the penultimate product, catalyzed by DEC1. Additional proteins are required for the biosynthesis of T-toxin, including oxidoreductases RED1, RED2, RED3, LAM1 and OXI1, as well as esterase TOX9. The polypeptide is Probable esterase TOX9 (Cochliobolus heterostrophus (strain C4 / ATCC 48331 / race T) (Southern corn leaf blight fungus)).